The primary structure comprises 193 residues: UPF0301 protein SAV_5129 (193 aa).

Belongs to the UPF0301 (AlgH) family.

The chain is UPF0301 protein SAV_5129 from Streptomyces avermitilis (strain ATCC 31267 / DSM 46492 / JCM 5070 / NBRC 14893 / NCIMB 12804 / NRRL 8165 / MA-4680).